Here is a 640-residue protein sequence, read N- to C-terminus: Serine/threonine-protein phosphatase with EF-hands 1 (640 aa).

One can recognise an IQ domain in the interval 16–45 (VVRAALIIQNWYRRYRARLSARQHYALAIF). The tract at residues 122–445 (INLLLQAFKQ…PQFFQYQVTS (324 aa)) is catalytic. Mn(2+) contacts are provided by Asp-173, His-175, Asp-202, and Asn-234. His-235 acts as the Proton donor in catalysis. Positions 286 and 393 each coordinate Mn(2+). 3 EF-hand domains span residues 473 to 508 (ARKT…ILGL), 556 to 591 (RYRS…FNAH), and 596 to 631 (IDDS…VHKY). Asp-569, Asp-571, Ser-573, Glu-580, Asp-609, Asn-611, Asp-613, Asn-615, and Glu-620 together coordinate Ca(2+).

This sequence belongs to the PPP phosphatase family. Requires Mn(2+) as cofactor. The cofactor is Mg(2+).

It carries out the reaction O-phospho-L-seryl-[protein] + H2O = L-seryl-[protein] + phosphate. The enzyme catalyses O-phospho-L-threonyl-[protein] + H2O = L-threonyl-[protein] + phosphate. With respect to regulation, activated by calcium. Its function is as follows. May have a role in the recovery or adaptation response of photoreceptors. May have a role in development. The sequence is that of Serine/threonine-protein phosphatase with EF-hands 1 (Ppef1) from Rattus norvegicus (Rat).